The following is a 234-amino-acid chain: MSRYFVAGSHTDVGKTFVSCQLIRAERAAGRSATAFKPVLSGFDPDRAEASDAGQLLEALGEPVTSTRLDRISPLRFIAPLAPPSAARLEGVVLTRDRLLTLSNAWLSRTDADLNLLEGAGGVMSPIAEDATNLDLMTGLGLPVILVGGSYLGAISHTLTALEVLRTRSLTIAAVVVSQSADPEAPDFAETVELTRQHAGGVPIFAAPRNGHAAWASALTEALAARRRLRTSAA.

Residue 12–17 (DVGKTF) coordinates ATP. T16 serves as a coordination point for Mg(2+). K37 is a catalytic residue. Residue S41 participates in substrate binding. ATP contacts are provided by residues D52, 118–121 (EGAG), and 178–179 (SQ). Residues D52 and E118 each contribute to the Mg(2+) site.

It belongs to the dethiobiotin synthetase family. In terms of assembly, homodimer. It depends on Mg(2+) as a cofactor.

The protein localises to the cytoplasm. It catalyses the reaction (7R,8S)-7,8-diammoniononanoate + CO2 + ATP = (4R,5S)-dethiobiotin + ADP + phosphate + 3 H(+). The protein operates within cofactor biosynthesis; biotin biosynthesis; biotin from 7,8-diaminononanoate: step 1/2. Functionally, catalyzes a mechanistically unusual reaction, the ATP-dependent insertion of CO2 between the N7 and N8 nitrogen atoms of 7,8-diaminopelargonic acid (DAPA, also called 7,8-diammoniononanoate) to form a ureido ring. This Phenylobacterium zucineum (strain HLK1) protein is ATP-dependent dethiobiotin synthetase BioD.